A 138-amino-acid polypeptide reads, in one-letter code: uncharacterized protein (138 aa).

Helical transmembrane passes span Leu8–Pro28, Phe47–Val67, and Thr82–Ile102.

To U.parvum UU007, UU008 and UU041.

It is found in the cell membrane. This is an uncharacterized protein from Ureaplasma parvum serovar 3 (strain ATCC 700970).